The chain runs to 209 residues: Thymidine kinase (209 aa).

Residues 16 to 23 and 90 to 93 contribute to the ATP site; these read GPMFAGKT and DESQ. The Proton acceptor role is filled by E91.

It belongs to the thymidine kinase family. In terms of assembly, homotetramer.

The protein resides in the cytoplasm. It catalyses the reaction thymidine + ATP = dTMP + ADP + H(+). This chain is Thymidine kinase, found in Aster yellows witches'-broom phytoplasma (strain AYWB).